A 472-amino-acid polypeptide reads, in one-letter code: 3-isopropylmalate dehydratase large subunit (472 aa).

3 residues coordinate [4Fe-4S] cluster: Cys-347, Cys-409, and Cys-412.

It belongs to the aconitase/IPM isomerase family. LeuC type 1 subfamily. As to quaternary structure, heterodimer of LeuC and LeuD. The cofactor is [4Fe-4S] cluster.

It catalyses the reaction (2R,3S)-3-isopropylmalate = (2S)-2-isopropylmalate. Its pathway is amino-acid biosynthesis; L-leucine biosynthesis; L-leucine from 3-methyl-2-oxobutanoate: step 2/4. In terms of biological role, catalyzes the isomerization between 2-isopropylmalate and 3-isopropylmalate, via the formation of 2-isopropylmaleate. This chain is 3-isopropylmalate dehydratase large subunit, found in Salinibacter ruber (strain DSM 13855 / M31).